Consider the following 710-residue polypeptide: Ephexin-1 (710 aa).

A compositionally biased stretch (basic and acidic residues) spans M1 to S20. Residues M1 to D146 form a disordered region. The regulatory region; modulates activity toward RHOA, RAC1 and CDC42 stretch occupies residues M1–I272. Polar residues predominate over residues Q123–T137. Position 177 is a phosphotyrosine (Y177). A disordered region spans residues R192–R234. Acidic residues predominate over residues D211–L227. Residues R273–G457 form the DH domain. The PH domain maps to W489–R601. In terms of domain architecture, SH3 spans L612–N673. Basic and acidic residues predominate over residues H688–K699. The interval H688 to Q710 is disordered. A compositionally biased stretch (basic residues) spans D700–Q710.

Interacts with CDK5R1 and EPHA4; activated by EPHA4 through the CDK5 kinase. In terms of processing, src-dependent phosphorylation at Tyr-177 upon EPHA4 activation increases the guanine exchange factor activity toward RHOA. Phosphorylation by CDK5 upon EPHA4 activation by EFNA1 may regulate dendritic spine morphogenesis. In terms of tissue distribution, highly expressed in brain and to a lower extent in eye.

The protein localises to the cytoplasm. Its subcellular location is the membrane. The protein resides in the cell projection. It localises to the growth cone. Functionally, acts as a guanine nucleotide exchange factor (GEF) which differentially activates the GTPases RHOA, RAC1 and CDC42. Plays a role in axon guidance regulating ephrin-induced growth cone collapse and dendritic spine morphogenesis. Upon activation by ephrin through EPHA4, the GEF activity switches toward RHOA resulting in its activation. Activated RHOA promotes cone retraction at the expense of RAC1- and CDC42-stimulated growth cone extension. The chain is Ephexin-1 (Ngef) from Mus musculus (Mouse).